The following is a 277-amino-acid chain: Shikimate dehydrogenase (NADP(+)) (277 aa).

Residues 17-19 (SRS) and threonine 64 each bind shikimate. The active-site Proton acceptor is lysine 68. Shikimate contacts are provided by asparagine 88 and aspartate 103. NADP(+) contacts are provided by residues 128 to 132 (GAGGS) and leucine 217. A shikimate-binding site is contributed by tyrosine 219. An NADP(+)-binding site is contributed by glycine 240.

Belongs to the shikimate dehydrogenase family. As to quaternary structure, homodimer.

It catalyses the reaction shikimate + NADP(+) = 3-dehydroshikimate + NADPH + H(+). It participates in metabolic intermediate biosynthesis; chorismate biosynthesis; chorismate from D-erythrose 4-phosphate and phosphoenolpyruvate: step 4/7. Its function is as follows. Involved in the biosynthesis of the chorismate, which leads to the biosynthesis of aromatic amino acids. Catalyzes the reversible NADPH linked reduction of 3-dehydroshikimate (DHSA) to yield shikimate (SA). The polypeptide is Shikimate dehydrogenase (NADP(+)) (Afipia carboxidovorans (strain ATCC 49405 / DSM 1227 / KCTC 32145 / OM5) (Oligotropha carboxidovorans)).